A 447-amino-acid chain; its full sequence is Phosphoglucosamine mutase (447 aa).

Residue serine 88 is the Phosphoserine intermediate of the active site. 4 residues coordinate Mg(2+): serine 88, aspartate 231, aspartate 233, and aspartate 235. The residue at position 88 (serine 88) is a Phosphoserine.

Belongs to the phosphohexose mutase family. Requires Mg(2+) as cofactor. Post-translationally, activated by phosphorylation.

The enzyme catalyses alpha-D-glucosamine 1-phosphate = D-glucosamine 6-phosphate. Catalyzes the conversion of glucosamine-6-phosphate to glucosamine-1-phosphate. The polypeptide is Phosphoglucosamine mutase (Methanococcus maripaludis (strain C7 / ATCC BAA-1331)).